A 292-amino-acid polypeptide reads, in one-letter code: Probable vesicular-fusion protein sec17 homolog (292 aa).

It belongs to the SNAP family.

Its subcellular location is the membrane. Required for vesicular transport between the endoplasmic reticulum and the Golgi apparatus. The polypeptide is Probable vesicular-fusion protein sec17 homolog (Neurospora crassa (strain ATCC 24698 / 74-OR23-1A / CBS 708.71 / DSM 1257 / FGSC 987)).